The primary structure comprises 732 residues: Small conductance calcium-activated potassium channel protein 3 (732 aa).

Positions 1 to 11 are enriched in basic and acidic residues; that stretch reads MDTSGHFHDSG. Disordered stretches follow at residues 1 to 82 and 103 to 162; these read MDTS…QQAP and HSSP…ASPL. The segment covering 35–59 has biased composition (pro residues); sequence QPPPPSAPPAVPQQPPGPLLQPQPP. A compositionally biased stretch (low complexity) spans 60–82; sequence QLQQQQQQQQQQQQQQQQQQQAP. Polar residues predominate over residues 113-133; the sequence is NSANSTAILHPSSRQGSQLNL. Over residues 139-148 the composition is skewed to low complexity; the sequence is GHSPSSTATS. At Ser-168 the chain carries Phosphoserine. A compositionally biased stretch (polar residues) spans 241-257; sequence THNHQHAGTTAGSTTFP. Residues 241–260 form a disordered region; that stretch reads THNHQHAGTTAGSTTFPKAN. A helical membrane pass occupies residues 289-309; the sequence is LIFGMFGIVVMVIETELSWGL. Residues 316–336 traverse the membrane as a helical segment; sequence FSLALKCLISLSTIILLGLII. The chain crosses the membrane as a helical span at residues 367 to 387; sequence ISLEMLVCAIHPIPGEYKFFW. The helical transmembrane segment at 406–426 threads the bilayer; the sequence is IILSIPMFLRLYLIARVMLLH. The helical transmembrane segment at 455–475 threads the bilayer; it reads LMTICPGTVLLVFSISLWIIA. The segment at residues 495 to 515 is an intramembrane region (pore-forming); it reads FLGAMWLISITFLSIGYGDMV. The helical transmembrane segment at 524 to 544 threads the bilayer; the sequence is VCLLTGIMGAGCTALVVAVVA. A calmodulin-binding region spans residues 562–638; it reads DTQLTKRIKN…LVDLSKMQNV (77 aa). A coiled-coil region spans residues 643–670; that stretch reads ITELNDRSEDLEKQIGSLESKLEHLTAS. A disordered region spans residues 704–732; the sequence is GTSHAPPSDSPIGISSTSFPTPYTSSSSC. Over residues 718–732 the composition is skewed to low complexity; it reads SSTSFPTPYTSSSSC.

Belongs to the potassium channel KCNN family. KCa2.3/KCNN3 subfamily. Homodimer. Heteromultimer with KCNN2 or KCNN1; this modulates plasma membrane expression and consequently the small conductance calcium-activated potassium channel activity. The complex is composed of 4 channel subunits each of which binds to a calmodulin subunit which regulates the channel activity through calcium-binding. Interacts with CALM1.

It is found in the cell membrane. Its subcellular location is the cytoplasm. The protein localises to the myofibril. The protein resides in the sarcomere. It localises to the z line. The catalysed reaction is K(+)(in) = K(+)(out). Inhibited by bee venom neurotoxin apamin. Small conductance calcium-activated potassium channel that mediates the voltage-independent transmembrane transfer of potassium across the cell membrane through a constitutive interaction with calmodulin which binds the intracellular calcium allowing its opening. The current is characterized by a voltage-independent activation, an intracellular calcium concentration increase-dependent activation and a single-channel conductance of 10 picosiemens. Also presents an inwardly rectifying current, thus reducing its already small outward conductance of potassium ions, which is particularly the case when the membrane potential displays positive values, above + 20 mV. Activation is followed by membrane hyperpolarization. Thought to regulate neuronal excitability by contributing to the slow component of synaptic afterhyperpolarization. In Rattus norvegicus (Rat), this protein is Small conductance calcium-activated potassium channel protein 3.